Consider the following 80-residue polypeptide: Conotoxin PnMKLT1-0121 (80 aa).

The signal sequence occupies residues Met1–Ala22. A propeptide spanning residues Asp23–Asn49 is cleaved from the precursor. 3 disulfide bridges follow: Cys52–Cys67, Cys59–Cys71, and Cys66–Cys75.

This sequence belongs to the conotoxin O1 superfamily. In terms of tissue distribution, expressed by the venom duct.

The protein resides in the secreted. In Conus pennaceus (Feathered cone), this protein is Conotoxin PnMKLT1-0121.